Here is a 242-residue protein sequence, read N- to C-terminus: MTFTLLPAVDVVDGQAVRLDQGEAGTEKSYGSPIAAALKWQEQGASWLHFVDLDAAFNRGSNHELMAEVVKNLDINVELTGGIRDDASLKRALATGARRVNIGTAALEKPEWIEKVLGEYGDAIAVDIAVRNIDGQWRTRGNGWVSDGGDLWEVLERLDSQGCTRFVVTDVSKDGTLSGPNIDLLRDVSAATDAKVVASGGISTLEDVLELARYEDEGIDSAIIGKALYEGRFTLKEALAAL.

Aspartate 10 acts as the Proton acceptor in catalysis.

Belongs to the HisA/HisF family.

The protein localises to the cytoplasm. The catalysed reaction is 1-(5-phospho-beta-D-ribosyl)-5-[(5-phospho-beta-D-ribosylamino)methylideneamino]imidazole-4-carboxamide = 5-[(5-phospho-1-deoxy-D-ribulos-1-ylimino)methylamino]-1-(5-phospho-beta-D-ribosyl)imidazole-4-carboxamide. The protein operates within amino-acid biosynthesis; L-histidine biosynthesis; L-histidine from 5-phospho-alpha-D-ribose 1-diphosphate: step 4/9. The polypeptide is 1-(5-phosphoribosyl)-5-[(5-phosphoribosylamino)methylideneamino] imidazole-4-carboxamide isomerase (Corynebacterium diphtheriae (strain ATCC 700971 / NCTC 13129 / Biotype gravis)).